The sequence spans 151 residues: Abdominal ganglion neuropeptide L11 (151 aa).

An N-terminal signal peptide occupies residues 1–25 (MPCTPNSHRLLLVTALCLLITSLFA).

The protein resides in the secreted. The protein is Abdominal ganglion neuropeptide L11 of Aplysia californica (California sea hare).